A 225-amino-acid chain; its full sequence is Jeltraxin (225 aa).

Positions 1–19 are cleaved as a signal peptide; sequence MKGLVIFFCLFYGCHVAGA. Positions 21–223 constitute a Pentraxin (PTX) domain; the sequence is GKTIMLFPQK…IVVLRNQFIP (203 aa). The cysteines at positions 51 and 112 are disulfide-linked. Residues Asp75 and Asn76 each contribute to the Ca(2+) site. The N-linked (GlcNAc...) asparagine glycan is linked to Asn87. The Ca(2+) site is built by Glu153, Gln154, Asp155, and Gln165. Asn207 is a glycosylation site (N-linked (GlcNAc...) asparagine).

Homodecamer consisting of two homopentamer units. Pentraxin (or pentaxin) have a discoid arrangement of 5 non-covalently bound subunits. The cofactor is Ca(2+). In terms of processing, glycosylated. In terms of tissue distribution, oviduct. Highest expression levels were detected in the pars convoluta with lower levels detected in the pars recta. No expression was detected in the pars uterina.

Its subcellular location is the secreted. Its function is as follows. Calcium-dependent beta-galactose specific lectin. The protein is Jeltraxin of Lepidobatrachus laevis (Budgett's frog).